The primary structure comprises 354 residues: DNA polymerase IV (354 aa).

In terms of domain architecture, UmuC spans 8–189 (IIHIDMDCFY…LPLQKIPGVG (182 aa)). Positions 12 and 107 each coordinate Mg(2+). Residue Glu108 is part of the active site.

The protein belongs to the DNA polymerase type-Y family. Monomer. It depends on Mg(2+) as a cofactor.

The protein localises to the cytoplasm. The catalysed reaction is DNA(n) + a 2'-deoxyribonucleoside 5'-triphosphate = DNA(n+1) + diphosphate. Its function is as follows. Poorly processive, error-prone DNA polymerase involved in untargeted mutagenesis. Copies undamaged DNA at stalled replication forks, which arise in vivo from mismatched or misaligned primer ends. These misaligned primers can be extended by PolIV. Exhibits no 3'-5' exonuclease (proofreading) activity. May be involved in translesional synthesis, in conjunction with the beta clamp from PolIII. This chain is DNA polymerase IV, found in Vibrio vulnificus (strain CMCP6).